An 89-amino-acid chain; its full sequence is Small ribosomal subunit protein uS15 (89 aa).

This sequence belongs to the universal ribosomal protein uS15 family. As to quaternary structure, part of the 30S ribosomal subunit. Forms a bridge to the 50S subunit in the 70S ribosome, contacting the 23S rRNA.

In terms of biological role, one of the primary rRNA binding proteins, it binds directly to 16S rRNA where it helps nucleate assembly of the platform of the 30S subunit by binding and bridging several RNA helices of the 16S rRNA. Forms an intersubunit bridge (bridge B4) with the 23S rRNA of the 50S subunit in the ribosome. The polypeptide is Small ribosomal subunit protein uS15 (Bacillus licheniformis (strain ATCC 14580 / DSM 13 / JCM 2505 / CCUG 7422 / NBRC 12200 / NCIMB 9375 / NCTC 10341 / NRRL NRS-1264 / Gibson 46)).